We begin with the raw amino-acid sequence, 46 residues long: Protein PsbN (46 aa).

The helical transmembrane segment at 7–27 (GLSIAITFAVILLALTGFSIY) threads the bilayer.

The protein belongs to the PsbN family.

The protein localises to the cellular thylakoid membrane. Its function is as follows. May play a role in photosystem I and II biogenesis. The protein is Protein PsbN of Synechococcus elongatus (strain ATCC 33912 / PCC 7942 / FACHB-805) (Anacystis nidulans R2).